A 351-amino-acid chain; its full sequence is Columbamine O-methyltransferase (351 aa).

Residues Gly198, Asp221, Asp241, Met242, and Lys255 each contribute to the S-adenosyl-L-methionine site. His259 functions as the Proton acceptor in the catalytic mechanism.

The protein belongs to the class I-like SAM-binding methyltransferase superfamily. Cation-independent O-methyltransferase family. COMT subfamily. In terms of assembly, homodimer.

The enzyme catalyses columbamine + S-adenosyl-L-methionine = palmatine + S-adenosyl-L-homocysteine + H(+). It catalyses the reaction (S)-tetrahydrocolumbamine + S-adenosyl-L-methionine = (S)-tetrahydropalmatine + S-adenosyl-L-homocysteine + H(+). It functions in the pathway alkaloid biosynthesis; palmatine biosynthesis; palmatine from columbamine: step 1/1. In terms of biological role, catalyzes the conversion of tetrahydrocolumbamine to (S)-tetrahydropalmatine and of columbamine to palmatine, an isoquinoline alkaloid. The protein is Columbamine O-methyltransferase of Coptis japonica (Japanese goldthread).